Reading from the N-terminus, the 535-residue chain is Dimethylaniline monooxygenase [N-oxide-forming] 2 (535 aa).

Ala2 carries the N-acetylalanine modification. Residues 9–13 (GAGVS), Glu32, 40–41 (LW), and 61–62 (NT) contribute to the FAD site. Residues 60–61 (TN) and 195–198 (SASD) contribute to the NADP(+) site. A Glycyl lysine isopeptide (Lys-Gly) (interchain with G-Cter in SUMO) cross-link involves residue Lys492. A helical membrane pass occupies residues 510-530 (LSASFLMKILALVAVFVAFFS).

This sequence belongs to the FMO family. Requires FAD as cofactor. Mg(2+) is required as a cofactor. As to expression, lung.

The protein localises to the microsome membrane. It is found in the endoplasmic reticulum membrane. In terms of biological role, catalyzes the oxidative metabolism of numerous xenobiotics, including mainly therapeutic drugs and insecticides that contain a soft nucleophile, most commonly nitrogen and sulfur and participates to their bioactivation. In Cavia porcellus (Guinea pig), this protein is Dimethylaniline monooxygenase [N-oxide-forming] 2.